The sequence spans 282 residues: Bifunctional protein FolD (282 aa).

NADP(+)-binding positions include 165-167 (NRS), S190, and I231.

This sequence belongs to the tetrahydrofolate dehydrogenase/cyclohydrolase family. As to quaternary structure, homodimer.

It carries out the reaction (6R)-5,10-methylene-5,6,7,8-tetrahydrofolate + NADP(+) = (6R)-5,10-methenyltetrahydrofolate + NADPH. It catalyses the reaction (6R)-5,10-methenyltetrahydrofolate + H2O = (6R)-10-formyltetrahydrofolate + H(+). The protein operates within one-carbon metabolism; tetrahydrofolate interconversion. Catalyzes the oxidation of 5,10-methylenetetrahydrofolate to 5,10-methenyltetrahydrofolate and then the hydrolysis of 5,10-methenyltetrahydrofolate to 10-formyltetrahydrofolate. The chain is Bifunctional protein FolD from Clostridium botulinum (strain ATCC 19397 / Type A).